The following is a 328-amino-acid chain: MTAAALQIAITTGEPAGVGPELTVQALQDAARRWPDAQFTVLGDAALLDARAAAVGADRAVLAGGPVSVQHHPLAAPAHAGTLDAANGRYVLALLDAAIDGALAGRYDAIVTAPLQKSTINDAGVPFTGHTEYLAERTHTPRVVMMLAGTGERPLRVALATTHLPLKDVSAALTIDGLVDTLAIIDRDLRRDFGLAAPRILVTGLNPHAGENGYLGREEIDVIAPALARASERGIDARGPYPADTLFQPRYLAGADCVLAMFHDQGLPVLKYATFGEGINVTLGLPIIRTSVDHGTALDLAGTGRADPGSMVAALDTAVTMARHRRAS.

2 residues coordinate substrate: His-130 and Thr-131. 3 residues coordinate a divalent metal cation: His-163, His-208, and His-263. Lys-271, Asn-280, and Arg-289 together coordinate substrate.

It belongs to the PdxA family. In terms of assembly, homodimer. Zn(2+) is required as a cofactor. Mg(2+) serves as cofactor. The cofactor is Co(2+).

The protein resides in the cytoplasm. It catalyses the reaction 4-(phosphooxy)-L-threonine + NAD(+) = 3-amino-2-oxopropyl phosphate + CO2 + NADH. It functions in the pathway cofactor biosynthesis; pyridoxine 5'-phosphate biosynthesis; pyridoxine 5'-phosphate from D-erythrose 4-phosphate: step 4/5. In terms of biological role, catalyzes the NAD(P)-dependent oxidation of 4-(phosphooxy)-L-threonine (HTP) into 2-amino-3-oxo-4-(phosphooxy)butyric acid which spontaneously decarboxylates to form 3-amino-2-oxopropyl phosphate (AHAP). This chain is 4-hydroxythreonine-4-phosphate dehydrogenase, found in Burkholderia vietnamiensis (strain G4 / LMG 22486) (Burkholderia cepacia (strain R1808)).